We begin with the raw amino-acid sequence, 159 residues long: UPF0262 protein CCNA_02430 (159 aa).

The protein belongs to the UPF0262 family.

This chain is UPF0262 protein CCNA_02430, found in Caulobacter vibrioides (strain NA1000 / CB15N) (Caulobacter crescentus).